We begin with the raw amino-acid sequence, 60 residues long: Protein translocase subunit SecE (60 aa).

Topologically, residues 1-31 (MFARLIRYFQEARAELARVTWPTREQVVEGT) are cytoplasmic. The helical transmembrane segment at 32–52 (QAILLFTLAFMVILGLYDTVF) threads the bilayer. The Extracellular portion of the chain corresponds to 53-60 (RFLIGLLR).

It belongs to the SecE/SEC61-gamma family. As to quaternary structure, component of the Sec protein translocase complex. Heterotrimer consisting of SecY, SecE and SecG subunits. The heterotrimers can form oligomers, although 1 heterotrimer is thought to be able to translocate proteins. Interacts with SecDF, and other proteins may be involved. The channel interacts with SecA via subunit SecY.

The protein resides in the cell inner membrane. In terms of biological role, essential subunit of the protein translocation channel SecYEG. Clamps together the 2 halves of SecY. May contact the channel plug during translocation. In Thermus thermophilus (strain ATCC 27634 / DSM 579 / HB8), this protein is Protein translocase subunit SecE.